A 316-amino-acid polypeptide reads, in one-letter code: uncharacterized protein (316 aa).

Threonine 126 contributes to the substrate binding site. Tyrosine 149 functions as the Proton acceptor in the catalytic mechanism.

This sequence belongs to the NAD(P)-dependent epimerase/dehydratase family.

This is an uncharacterized protein from Bacillus subtilis (strain 168).